Reading from the N-terminus, the 301-residue chain is MSHTAEIPLVPGSESPLELKPLKAADPHVVYHRRAHRLLSLAKDSPLADYFELCRRLVSIQAKLAEEADFGQLLAWGKDEATPLSLLGSEADSYWQGLLQQLLSDLLPQVDESIARVVRLLMQQSPEQLSSWGRSLRQGHVSEVPAHFSLFIWAAMGVYWSHWAPMVIKRMDQRKVAQQSMCPVCGCHPVASVIVDQPRAGLRYLHCSLCESEWHYIRAHCTSCGQDKEMTIWSLDDAQAQVRIESCDECHGYTKMMFVEMSPSMDVVADDLATLMLDSELNAKGFGATTLNPLLMAHEIT.

Belongs to the FdhE family.

Its subcellular location is the cytoplasm. Necessary for formate dehydrogenase activity. In Shewanella baltica (strain OS223), this protein is Protein FdhE homolog.